A 176-amino-acid polypeptide reads, in one-letter code: NAD(P)H-quinone oxidoreductase subunit 6, chloroplastic (176 aa).

5 helical membrane-spanning segments follow: residues 10–30 (FLLV…VLLP), 32–52 (PIFS…LYIL), 61–81 (AQLL…VMFM), 92–112 (LWTI…FLLM), and 152–172 (FFLP…GAIS).

The protein belongs to the complex I subunit 6 family. NDH is composed of at least 16 different subunits, 5 of which are encoded in the nucleus.

The protein localises to the plastid. The protein resides in the chloroplast thylakoid membrane. The catalysed reaction is a plastoquinone + NADH + (n+1) H(+)(in) = a plastoquinol + NAD(+) + n H(+)(out). It carries out the reaction a plastoquinone + NADPH + (n+1) H(+)(in) = a plastoquinol + NADP(+) + n H(+)(out). Its function is as follows. NDH shuttles electrons from NAD(P)H:plastoquinone, via FMN and iron-sulfur (Fe-S) centers, to quinones in the photosynthetic chain and possibly in a chloroplast respiratory chain. The immediate electron acceptor for the enzyme in this species is believed to be plastoquinone. Couples the redox reaction to proton translocation, and thus conserves the redox energy in a proton gradient. This is NAD(P)H-quinone oxidoreductase subunit 6, chloroplastic (ndhG) from Arabidopsis thaliana (Mouse-ear cress).